The sequence spans 421 residues: GTPase Obg (421 aa).

One can recognise an Obg domain in the interval 1–158 (MFIDVAKIEL…KTIKLELKLL (158 aa)). The disordered stretch occupies residues 21-40 (AFRREKYEPSGGPAGGDGGD). The OBG-type G domain occupies 159 to 328 (ADVGLIGLPN…LMYLIADTLD (170 aa)). GTP-binding positions include 165–172 (GLPNVGKS), 190–194 (FTTLE), 211–214 (DIPG), 281–284 (NKTD), and 309–311 (SAA). Mg(2+)-binding residues include serine 172 and threonine 192. One can recognise an OCT domain in the interval 344 to 421 (FEEEKEPDFK…IGDVEFDFYE (78 aa)).

The protein belongs to the TRAFAC class OBG-HflX-like GTPase superfamily. OBG GTPase family. In terms of assembly, monomer. Mg(2+) is required as a cofactor.

The protein resides in the cytoplasm. An essential GTPase which binds GTP, GDP and possibly (p)ppGpp with moderate affinity, with high nucleotide exchange rates and a fairly low GTP hydrolysis rate. Plays a role in control of the cell cycle, stress response, ribosome biogenesis and in those bacteria that undergo differentiation, in morphogenesis control. The polypeptide is GTPase Obg (Finegoldia magna (strain ATCC 29328 / DSM 20472 / WAL 2508) (Peptostreptococcus magnus)).